Reading from the N-terminus, the 466-residue chain is ATP synthase subunit beta (466 aa).

156–163 (GGAGVGKT) is a binding site for ATP.

It belongs to the ATPase alpha/beta chains family. As to quaternary structure, F-type ATPases have 2 components, CF(1) - the catalytic core - and CF(0) - the membrane proton channel. CF(1) has five subunits: alpha(3), beta(3), gamma(1), delta(1), epsilon(1). CF(0) has three main subunits: a(1), b(2) and c(9-12). The alpha and beta chains form an alternating ring which encloses part of the gamma chain. CF(1) is attached to CF(0) by a central stalk formed by the gamma and epsilon chains, while a peripheral stalk is formed by the delta and b chains.

It localises to the cell inner membrane. It catalyses the reaction ATP + H2O + 4 H(+)(in) = ADP + phosphate + 5 H(+)(out). Functionally, produces ATP from ADP in the presence of a proton gradient across the membrane. The catalytic sites are hosted primarily by the beta subunits. In Polynucleobacter necessarius subsp. necessarius (strain STIR1), this protein is ATP synthase subunit beta.